A 298-amino-acid polypeptide reads, in one-letter code: GTP cyclohydrolase FolE2 (298 aa).

This sequence belongs to the GTP cyclohydrolase IV family.

It carries out the reaction GTP + H2O = 7,8-dihydroneopterin 3'-triphosphate + formate + H(+). It functions in the pathway cofactor biosynthesis; 7,8-dihydroneopterin triphosphate biosynthesis; 7,8-dihydroneopterin triphosphate from GTP: step 1/1. In terms of biological role, converts GTP to 7,8-dihydroneopterin triphosphate. In Pseudomonas paraeruginosa (strain DSM 24068 / PA7) (Pseudomonas aeruginosa (strain PA7)), this protein is GTP cyclohydrolase FolE2.